A 155-amino-acid chain; its full sequence is Small ribosomal subunit protein uS7cz/uS7cy (155 aa).

It belongs to the universal ribosomal protein uS7 family. In terms of assembly, part of the 30S ribosomal subunit.

The protein localises to the plastid. Its subcellular location is the chloroplast. One of the primary rRNA binding proteins, it binds directly to 16S rRNA where it nucleates assembly of the head domain of the 30S subunit. The chain is Small ribosomal subunit protein uS7cz/uS7cy (rps7-A) from Jasminum nudiflorum (Winter jasmine).